A 148-amino-acid polypeptide reads, in one-letter code: Large ribosomal subunit protein bL9 (148 aa).

This sequence belongs to the bacterial ribosomal protein bL9 family.

Its function is as follows. Binds to the 23S rRNA. In Acinetobacter baumannii (strain AB307-0294), this protein is Large ribosomal subunit protein bL9.